The sequence spans 140 residues: Peptide methionine sulfoxide reductase MsrB (140 aa).

The MsrB domain occupies 10–132 (EEDWKSVLTP…NSVSLGFTKE (123 aa)). 4 residues coordinate Zn(2+): Cys49, Cys52, Cys98, and Cys101. The Nucleophile role is filled by Cys121.

Belongs to the MsrB Met sulfoxide reductase family. It depends on Zn(2+) as a cofactor.

It carries out the reaction L-methionyl-[protein] + [thioredoxin]-disulfide + H2O = L-methionyl-(R)-S-oxide-[protein] + [thioredoxin]-dithiol. The sequence is that of Peptide methionine sulfoxide reductase MsrB from Methanosarcina mazei (strain ATCC BAA-159 / DSM 3647 / Goe1 / Go1 / JCM 11833 / OCM 88) (Methanosarcina frisia).